Consider the following 181-residue polypeptide: UPF0177 protein YbdI (181 aa).

The next 5 helical transmembrane spans lie at 10–30 (ILFL…GVFA), 41–61 (LLWL…AHYL), 81–101 (FVDS…IAPI), 114–134 (FFSH…LIHT), and 161–181 (SDSI…HIII).

It belongs to the UPF0177 family.

It is found in the cell membrane. This Lactococcus lactis subsp. lactis (strain IL1403) (Streptococcus lactis) protein is UPF0177 protein YbdI (ybdI).